We begin with the raw amino-acid sequence, 399 residues long: Acetate kinase (399 aa).

Mg(2+) is bound at residue asparagine 7. Lysine 14 provides a ligand contact to ATP. Arginine 89 is a substrate binding site. Aspartate 146 acts as the Proton donor/acceptor in catalysis. ATP is bound by residues 206–210 (HIGSG), 280–282 (DFR), and 328–332 (GIGEN). Glutamate 382 contributes to the Mg(2+) binding site.

Belongs to the acetokinase family. As to quaternary structure, homodimer. Requires Mg(2+) as cofactor. It depends on Mn(2+) as a cofactor.

The protein localises to the cytoplasm. It catalyses the reaction acetate + ATP = acetyl phosphate + ADP. It participates in metabolic intermediate biosynthesis; acetyl-CoA biosynthesis; acetyl-CoA from acetate: step 1/2. Catalyzes the formation of acetyl phosphate from acetate and ATP. Can also catalyze the reverse reaction. The sequence is that of Acetate kinase from Campylobacter hominis (strain ATCC BAA-381 / DSM 21671 / CCUG 45161 / LMG 19568 / NCTC 13146 / CH001A).